A 277-amino-acid chain; its full sequence is Alpha carbonic anhydrase 5 (277 aa).

The N-terminal stretch at 1 to 22 is a signal peptide; that stretch reads MKIPSIGYVFFLIFISITIVSS. An Alpha-carbonic anhydrase domain is found at 33-269; that stretch reads TQFNYEKKGE…KNERPVALYI (237 aa). Cysteine 58 and cysteine 219 are disulfide-bonded. Asparagine 91 carries an N-linked (GlcNAc...) asparagine glycan. Histidine 99 acts as the Proton acceptor in catalysis. An N-linked (GlcNAc...) asparagine glycan is attached at asparagine 117. 3 residues coordinate Zn(2+): histidine 127, histidine 129, and histidine 146. 215–216 serves as a coordination point for substrate; that stretch reads TT.

Belongs to the alpha-class carbonic anhydrase family. Zn(2+) is required as a cofactor. In terms of processing, N-glycosylated.

It is found in the plastid. Its subcellular location is the chloroplast stroma. It catalyses the reaction hydrogencarbonate + H(+) = CO2 + H2O. Its function is as follows. Reversible hydration of carbon dioxide. This Arabidopsis thaliana (Mouse-ear cress) protein is Alpha carbonic anhydrase 5 (ACA5).